We begin with the raw amino-acid sequence, 61 residues long: MRCLPVFVILLLLIASAPGVDVQPKTKYYVPRASRRDFAKKTPKRLSKLRGCCPRSFLCCR.

The first 19 residues, 1–19 (MRCLPVFVILLLLIASAPG), serve as a signal peptide directing secretion. Positions 20–50 (VDVQPKTKYYVPRASRRDFAKKTPKRLSKLR) are excised as a propeptide.

The protein belongs to the conotoxin T superfamily. In terms of processing, contains 2 disulfide bonds that can be either 'C1-C3, C2-C4' or 'C1-C4, C2-C3', since these disulfide connectivities have been observed for conotoxins with cysteine framework V (for examples, see AC P0DQQ7 and AC P81755). Expressed by the venom duct.

The protein localises to the secreted. In Conus ventricosus (Mediterranean cone), this protein is Conotoxin Vn5.3.